Consider the following 346-residue polypeptide: Lipase chaperone (346 aa).

The helical transmembrane segment at 10–30 (TIVFGVITSVLLLLLLIYYVF) threads the bilayer.

It belongs to the lipase chaperone family.

It is found in the cell inner membrane. Its function is as follows. May be involved in the folding of the extracellular lipase during its passage through the periplasm. This chain is Lipase chaperone (lifO), found in Acinetobacter venetianus (strain ATCC 31012 / DSM 23050 / BCRC 14357 / CCUG 45561 / CIP 110063 / KCTC 2702 / LMG 19082 / RAG-1).